Consider the following 423-residue polypeptide: Serine hydroxymethyltransferase (423 aa).

121 to 123 serves as a coordination point for (6S)-5,6,7,8-tetrahydrofolate; the sequence is GHI. Position 227 is an N6-(pyridoxal phosphate)lysine (Lys227). Glu242 contributes to the (6S)-5,6,7,8-tetrahydrofolate binding site.

This sequence belongs to the SHMT family. Homodimer. The cofactor is pyridoxal 5'-phosphate.

Its subcellular location is the cytoplasm. The catalysed reaction is 5,10-methylenetetrahydromethanopterin + glycine + H2O = 5,6,7,8-tetrahydromethanopterin + L-serine. The protein operates within amino-acid biosynthesis; glycine biosynthesis; glycine from L-serine: step 1/1. Catalyzes the reversible interconversion of serine and glycine with tetrahydromethanopterin (H4MPT) serving as the one-carbon carrier. Cannot use tetrahydrofolate (THF or H4PteGlu) instead of H4MPT as the pteridine substrate. Also probably exhibits a pteridine-independent aldolase activity toward beta-hydroxyamino acids, producing glycine and aldehydes, via a retro-aldol mechanism. In Methanothermobacter thermautotrophicus (strain ATCC 29096 / DSM 1053 / JCM 10044 / NBRC 100330 / Delta H) (Methanobacterium thermoautotrophicum), this protein is Serine hydroxymethyltransferase.